A 242-amino-acid chain; its full sequence is D-proline reductase subunit gamma (242 aa).

The active-site Nucleophile is the U152. Position 152 (U152) is a non-standard amino acid, selenocysteine.

Consists of 3 subunits of 23, 26 and 45 kDa (alpha, gamma and beta respectively). The molecular weight of the complex is approximately 870 kDa, suggesting a decameric structure, if all 3 subunits are present in equal stoichiometry. Post-translationally, this subunit is carbonylated in vitro on an unidentified residue.

The protein resides in the cytoplasm. The catalysed reaction is [PrdC protein]-Se-L-selenocysteinyl-S-L-cysteine + 5-aminopentanoate = [PrdC protein]-L-selenocysteine/L-cysteine + D-proline. D-proline reductase catalyzes the reductive cleavage of a C-N bond in D-proline resulting in the formation of 5-aminovalerate. The alpha subunit has been shown to bind D-proline, presumably via the pyruvoyl group. This is D-proline reductase subunit gamma (prdB) from Acetoanaerobium sticklandii (strain ATCC 12662 / DSM 519 / JCM 1433 / CCUG 9281 / NCIMB 10654 / HF) (Clostridium sticklandii).